The chain runs to 643 residues: NADH-ubiquinone oxidoreductase chain 5 (643 aa).

16 helical membrane-spanning segments follow: residues 7–27 (IIILTINISIIITLLSSVFFF), 64–84 (LLKTLAILSLFPLFIEIIFNI), 114–134 (TFLSVALIVSWSILEFSYYYM), 140–160 (PNNFFRLLIIFLLNMIILTST), 163–183 (IFLLFIGWEGVGFLSFLLISW), 208–228 (ILLFFSLSITLFNTWSLPEIF), 230–250 (ISAPNTFNNLLLVGLLIAAAG), 277–297 (SSTMVVAGIFLLIRLSPLYAC), 301–321 (FNTWCLILGSITAIFAATTAI), 338–358 (LGLMMVAIGLNQPSIALFHIC), 398–418 (AACIILGSLALSGIPFLPGFY), 437–457 (IVLSLLATLLTSVYSFRIIFF), 486–506 (ALGTILSGWILTNLTVLVPII), 511–531 (VLKTAALLLTITGVLFSISIL), 555–575 (FYENISHILFLFYSFTISLSL), and 615–635 (YLLFSFLTLLIIIALSLTTIS).

The protein belongs to the complex I subunit 5 family.

It is found in the mitochondrion inner membrane. It catalyses the reaction a ubiquinone + NADH + 5 H(+)(in) = a ubiquinol + NAD(+) + 4 H(+)(out). Core subunit of the mitochondrial membrane respiratory chain NADH dehydrogenase (Complex I) that is believed to belong to the minimal assembly required for catalysis. Complex I functions in the transfer of electrons from NADH to the respiratory chain. The immediate electron acceptor for the enzyme is believed to be ubiquinone. This is NADH-ubiquinone oxidoreductase chain 5 (ND5) from Patiria pectinifera (Starfish).